We begin with the raw amino-acid sequence, 713 residues long: BBSome complex assembly protein BBS10 (713 aa).

The protein belongs to the TCP-1 chaperonin family. As to quaternary structure, component of a complex composed at least of MKKS, BBS10, BBS12, TCP1, CCT2, CCT3, CCT4, CCT5 and CCT8.

Its subcellular location is the cell projection. It is found in the cilium. Functionally, probable molecular chaperone that assists the folding of proteins upon ATP hydrolysis. Plays a role in the assembly of BBSome, a complex involved in ciliogenesis regulating transports vesicles to the cilia. Involved in adipogenic differentiation. The protein is BBSome complex assembly protein BBS10 (Bbs10) of Mus musculus (Mouse).